We begin with the raw amino-acid sequence, 378 residues long: Mannitol-1-phosphate 5-dehydrogenase (378 aa).

Ser-4–Gly-15 is a binding site for NAD(+).

It belongs to the mannitol dehydrogenase family.

The enzyme catalyses D-mannitol 1-phosphate + NAD(+) = beta-D-fructose 6-phosphate + NADH + H(+). The polypeptide is Mannitol-1-phosphate 5-dehydrogenase (Streptococcus pneumoniae serotype 4 (strain ATCC BAA-334 / TIGR4)).